Reading from the N-terminus, the 243-residue chain is tRNA (guanine-N(1)-)-methyltransferase (243 aa).

S-adenosyl-L-methionine is bound by residues Gly-108 and 127 to 132; that span reads LGDFVL.

Belongs to the RNA methyltransferase TrmD family. As to quaternary structure, homodimer.

Its subcellular location is the cytoplasm. The enzyme catalyses guanosine(37) in tRNA + S-adenosyl-L-methionine = N(1)-methylguanosine(37) in tRNA + S-adenosyl-L-homocysteine + H(+). Its function is as follows. Specifically methylates guanosine-37 in various tRNAs. The chain is tRNA (guanine-N(1)-)-methyltransferase from Streptococcus equi subsp. zooepidemicus (strain H70).